Reading from the N-terminus, the 282-residue chain is tRNA (guanine-N(1)-)-methyltransferase (282 aa).

Residues 77-114 form a disordered region; it reads TGPAATVSDLESSAEHKRNLRPATTNGDAEPLGEKAGG. Residues G149 and 173 to 178 each bind S-adenosyl-L-methionine; that span reads IGDYVL.

The protein belongs to the RNA methyltransferase TrmD family. As to quaternary structure, homodimer.

Its subcellular location is the cytoplasm. The catalysed reaction is guanosine(37) in tRNA + S-adenosyl-L-methionine = N(1)-methylguanosine(37) in tRNA + S-adenosyl-L-homocysteine + H(+). Specifically methylates guanosine-37 in various tRNAs. In Corynebacterium jeikeium (strain K411), this protein is tRNA (guanine-N(1)-)-methyltransferase.